The chain runs to 397 residues: Cystinosin (397 aa).

The first 24 residues, 1-24 (MDFSTHRLTTLLLLLLATVALGNA), serve as a signal peptide directing secretion. At 25 to 126 (QSSQLTVDSH…FVRVTVAKSR (102 aa)) the chain is on the lumenal side. N-linked (GlcNAc...) asparagine glycans are attached at residues N43 and N86. A helical membrane pass occupies residues 127–147 (ALIYTSIIFGWVYFVAWSVSF). The 56-residue stretch at 132 to 187 (SIIFGWVYFVAWSVSFYPQIWSNYRRKSVEGLNFDFLALNIVGFTLYSMFNCGLYF) folds into the PQ-loop 1 domain. Topologically, residues 148-167 (YPQIWSNYRRKSVEGLNFDF) are cytoplasmic. A helical transmembrane segment spans residues 168–188 (LALNIVGFTLYSMFNCGLYFI). Residues 189-210 (EDLQNEYEVRYPLGVNPVMLND) lie on the Lumenal side of the membrane. The helical transmembrane segment at 211–231 (VVFSLHAMFATCITILQCFFY) threads the bilayer. At 232–239 (QRAQQRVS) the chain is on the cytoplasmic side. The helical transmembrane segment at 240–260 (FIAYGILAIFAVVVVVSAGLA) threads the bilayer. Topologically, residues 261-263 (GGS) are lumenal. Residues 264 to 284 (VIHWLDFLYYCSYVKLTITII) traverse the membrane as a helical segment. Residues 271-327 (LYYCSYVKLTITIIKYVPQALMNYRRKSTSGWSIGNILLDFTGGTLSMLQMILNAHN) enclose the PQ-loop 2 domain. Residues 285–302 (KYVPQALMNYRRKSTSGW) are Cytoplasmic-facing. Residues 303–323 (SIGNILLDFTGGTLSMLQMIL) form a helical membrane-spanning segment. Residues 324–340 (NAHNYDDWVSIFGDPTK) are Lumenal-facing. Residues 341-361 (FGLGLFSVLFDVFFMLQHYVF) form a helical membrane-spanning segment. Over 362 to 397 (YRHSRESSSSDLTTVTDVQNRTNESPPPSEVTTEKY) the chain is Cytoplasmic. Over residues 373–385 (LTTVTDVQNRTNE) the composition is skewed to polar residues. The interval 373 to 397 (LTTVTDVQNRTNESPPPSEVTTEKY) is disordered.

It belongs to the cystinosin family.

The protein localises to the lysosome membrane. The enzyme catalyses L-cystine(out) + H(+)(out) = L-cystine(in) + H(+)(in). In terms of biological role, cystine/H(+) symporter that mediates export of cystine, the oxidized dimer of cysteine, from lysosomes. Involved in cysteine homeostasis during periods of fasting, which indirectly regulates mTORC1-mediated signaling by supporting de novo CoA synthesis, the TCA cycle and amino acid metabolism during periods of food shortage. Important for maintaining autophagy, and for development and survival during periods of fasting. The polypeptide is Cystinosin (Drosophila melanogaster (Fruit fly)).